The following is a 397-amino-acid chain: FAD-dependent monooxygenase trt8 (397 aa).

Residue Y53 is part of the active site. FAD is bound by residues D145 and A158.

This sequence belongs to the paxM FAD-dependent monooxygenase family. It depends on FAD as a cofactor.

The protein operates within secondary metabolite biosynthesis; terpenoid biosynthesis. Its function is as follows. FAD-dependent monooxygenase; part of the gene cluster that mediates the biosynthesis of terretonin, a fungal meroterpenoid that acts as a mycotoxin. The first step of the pathway is the synthesis of 3,5-dimethylorsellinic acid (DMOA) by the polyketide synthase trt4. DMOA is then prenylated into farnesyl-DMOA by the polyprenyl transferase trt2. Methylation by the methyltransferase trt5 then leads to farnesyl-DMOA methyl ester which is further subject to epoxidation by the FAD-dependent monooxygenase trt8 to yield epoxyfarnesyl-DMOA methyl ester. Cyclization of epoxyfarnesyl-DMOA methyl ester by the terpene cyclase trt1 leads to a tetracycle intermediate which is in turn converted to preterretonin. Dehydrogenase trt9 comes next to transform preterretonin to preterrenoid. The FAD-dependent monooxygenase trt3 is then required for the C-hydroxylation at C16 of preterrenoid to yield terrenoid. The cytochrome P450 trt6 catalyzes three successive oxidations to transform terrenoid into an unstable intermediate, which then undergoes the D-ring expansion and unusual rearrangement of the methoxy group to afford the core skeleton of terretonin. Trt14 catalyzes the D-ring expansion of terretonin involving intramolecular methoxy rearrangement as well as the hydrolysis of the expanded D-ring and the methyl ester moiety. Finally, the nonheme iron-dependent dioxygenase trt7 accomplishes the last two oxidation reactions steps to complete the biosynthesis of terretonin. Terretonin C is produced via spontaneous decarboxylation of the terretonin precursor. Another shunt product of the terretonin biosynthesis is dihydrofarnesyl-DMOA, derived from epoxyfarnesyl-DMOA through hydrolysis of the epoxide. This Aspergillus terreus (strain NIH 2624 / FGSC A1156) protein is FAD-dependent monooxygenase trt8.